A 51-amino-acid polypeptide reads, in one-letter code: Protein HokD (51 aa).

The chain crosses the membrane as a helical span at residues 5–25 (KAMLIALIVICLTVIVTALVT).

It belongs to the Hok/Gef family.

The protein localises to the cell inner membrane. In terms of biological role, toxic component of a type I toxin-antitoxin (TA) system. When overexpressed kills cells within minutes; causes collapse of the transmembrane potential and arrest of respiration. Its toxic effect is probably neutralized by an antisense antitoxin Sok RNA. The sequence is that of Protein HokD (hokD) from Escherichia coli O157:H7.